The sequence spans 709 residues: Elongation factor G (709 aa).

One can recognise a tr-type G domain in the interval Ala9–Leu295. Residues Ala18–Thr25, Asp86–His90, and Asn140–Asp143 contribute to the GTP site.

This sequence belongs to the TRAFAC class translation factor GTPase superfamily. Classic translation factor GTPase family. EF-G/EF-2 subfamily.

It localises to the cytoplasm. Functionally, catalyzes the GTP-dependent ribosomal translocation step during translation elongation. During this step, the ribosome changes from the pre-translocational (PRE) to the post-translocational (POST) state as the newly formed A-site-bound peptidyl-tRNA and P-site-bound deacylated tRNA move to the P and E sites, respectively. Catalyzes the coordinated movement of the two tRNA molecules, the mRNA and conformational changes in the ribosome. This chain is Elongation factor G, found in Streptomyces avermitilis (strain ATCC 31267 / DSM 46492 / JCM 5070 / NBRC 14893 / NCIMB 12804 / NRRL 8165 / MA-4680).